Reading from the N-terminus, the 112-residue chain is DNA-binding protein TK1278 (112 aa).

It belongs to the PDCD5 family.

This chain is DNA-binding protein TK1278, found in Thermococcus kodakarensis (strain ATCC BAA-918 / JCM 12380 / KOD1) (Pyrococcus kodakaraensis (strain KOD1)).